We begin with the raw amino-acid sequence, 648 residues long: Macrolide export ATP-binding/permease protein MacB (648 aa).

One can recognise an ABC transporter domain in the interval 5 to 243 (LELKDIRRSY…AGGTEPVVNT (239 aa)). 41–48 (GASGSGKS) is an ATP binding site. 4 consecutive transmembrane segments (helical) span residues 273–293 (LLTM…VVVG), 523–543 (LFLT…VMNI), 576–596 (AVLV…LIAF), and 600–620 (LFLP…AFLC).

This sequence belongs to the ABC transporter superfamily. Macrolide exporter (TC 3.A.1.122) family. As to quaternary structure, homodimer. Part of the tripartite efflux system MacAB-TolC, which is composed of an inner membrane transporter, MacB, a periplasmic membrane fusion protein, MacA, and an outer membrane component, TolC. The complex forms a large protein conduit and can translocate molecules across both the inner and outer membranes. Interacts with MacA.

The protein localises to the cell inner membrane. Part of the tripartite efflux system MacAB-TolC. MacB is a non-canonical ABC transporter that contains transmembrane domains (TMD), which form a pore in the inner membrane, and an ATP-binding domain (NBD), which is responsible for energy generation. Confers resistance against macrolides. The polypeptide is Macrolide export ATP-binding/permease protein MacB (Shigella sonnei (strain Ss046)).